The sequence spans 159 residues: Small ribosomal subunit protein uS5c (159 aa).

The region spanning 17 to 80 is the S5 DRBM domain; the sequence is WEERVVSVQR…TDGKKNVITV (64 aa).

Belongs to the universal ribosomal protein uS5 family. As to quaternary structure, part of the 30S ribosomal subunit. Contacts protein S4.

It is found in the plastid. Its subcellular location is the chloroplast. Its function is as follows. With S4 and S12 plays an important role in translational accuracy. The polypeptide is Small ribosomal subunit protein uS5c (rps5) (Emiliania huxleyi (Coccolithophore)).